A 220-amino-acid chain; its full sequence is Ribosome maturation factor RimP (220 aa).

The tract at residues lysine 173–glutamate 220 is disordered.

The protein belongs to the RimP family.

It localises to the cytoplasm. In terms of biological role, required for maturation of 30S ribosomal subunits. The polypeptide is Ribosome maturation factor RimP (Chelativorans sp. (strain BNC1)).